The sequence spans 299 residues: tRNA-cytidine(32) 2-sulfurtransferase (299 aa).

A PP-loop motif motif is present at residues Ser56–Ser61. 3 residues coordinate [4Fe-4S] cluster: Cys131, Cys134, and Cys222.

It belongs to the TtcA family. As to quaternary structure, homodimer. Mg(2+) is required as a cofactor. Requires [4Fe-4S] cluster as cofactor.

It localises to the cytoplasm. The catalysed reaction is cytidine(32) in tRNA + S-sulfanyl-L-cysteinyl-[cysteine desulfurase] + AH2 + ATP = 2-thiocytidine(32) in tRNA + L-cysteinyl-[cysteine desulfurase] + A + AMP + diphosphate + H(+). It participates in tRNA modification. Its function is as follows. Catalyzes the ATP-dependent 2-thiolation of cytidine in position 32 of tRNA, to form 2-thiocytidine (s(2)C32). The sulfur atoms are provided by the cysteine/cysteine desulfurase (IscS) system. This chain is tRNA-cytidine(32) 2-sulfurtransferase, found in Xylella fastidiosa (strain M12).